The sequence spans 638 residues: Bifunctional protein glk (638 aa).

Positions 1 to 20 (MSTGVQTKAAPGAGQHADGP) are disordered. Residues 1 to 341 (MSTGVQTKAA…QLSNRAGGSS (341 aa)) form a glucokinase region. 24 to 29 (ADIGGT) serves as a coordination point for ATP. The HTH rpiR-type domain occupies 342 to 418 (SAVFERIRQM…LKLATGLTGT (77 aa)). Residues 342–638 (SAVFERIRQM…SHGAASSARD (297 aa)) are putative HTH-type transcriptional regulator. The H-T-H motif DNA-binding region spans 378-397 (IVDIARKADVSQPTVIRFCR). Positions 462-601 (AIDLLNGARR…AVGVAIRRAV (140 aa)) constitute an SIS domain.

This sequence in the N-terminal section; belongs to the bacterial glucokinase family.

The protein resides in the cytoplasm. The catalysed reaction is D-glucose + ATP = D-glucose 6-phosphate + ADP + H(+). This chain is Bifunctional protein glk (glk), found in Paraburkholderia xenovorans (strain LB400).